The following is a 229-amino-acid chain: ATP-dependent Clp protease proteolytic subunit (229 aa).

Serine 101 acts as the Nucleophile in catalysis. Residue histidine 126 is part of the active site.

It belongs to the peptidase S14 family. In terms of assembly, component of the chloroplastic Clp protease core complex.

The protein localises to the plastid. The protein resides in the chloroplast stroma. The enzyme catalyses Hydrolysis of proteins to small peptides in the presence of ATP and magnesium. alpha-casein is the usual test substrate. In the absence of ATP, only oligopeptides shorter than five residues are hydrolyzed (such as succinyl-Leu-Tyr-|-NHMec, and Leu-Tyr-Leu-|-Tyr-Trp, in which cleavage of the -Tyr-|-Leu- and -Tyr-|-Trp bonds also occurs).. In terms of biological role, cleaves peptides in various proteins in a process that requires ATP hydrolysis. Has a chymotrypsin-like activity. Plays a major role in the degradation of misfolded proteins. This Mesostigma viride (Green alga) protein is ATP-dependent Clp protease proteolytic subunit.